The following is a 438-amino-acid chain: Glutamate--tRNA ligase 2 (438 aa).

A 'HIGH' region motif is present at residues 6-16 (PSPTGDMHTGN). The short motif at 231-235 (KMSKR) is the 'KMSKS' region element. Lysine 234 is an ATP binding site.

The protein belongs to the class-I aminoacyl-tRNA synthetase family. Glutamate--tRNA ligase type 1 subfamily. Monomer.

The protein resides in the cytoplasm. The catalysed reaction is tRNA(Glu) + L-glutamate + ATP = L-glutamyl-tRNA(Glu) + AMP + diphosphate. Functionally, catalyzes the attachment of glutamate to tRNA(Glu) in a two-step reaction: glutamate is first activated by ATP to form Glu-AMP and then transferred to the acceptor end of tRNA(Glu). In Wolinella succinogenes (strain ATCC 29543 / DSM 1740 / CCUG 13145 / JCM 31913 / LMG 7466 / NCTC 11488 / FDC 602W) (Vibrio succinogenes), this protein is Glutamate--tRNA ligase 2.